The primary structure comprises 377 residues: DNA replication and repair protein RecF (377 aa).

30-37 serves as a coordination point for ATP; the sequence is GNNGSGKS.

It belongs to the RecF family.

Its subcellular location is the cytoplasm. Functionally, the RecF protein is involved in DNA metabolism; it is required for DNA replication and normal SOS inducibility. RecF binds preferentially to single-stranded, linear DNA. It also seems to bind ATP. This is DNA replication and repair protein RecF from Colwellia psychrerythraea (strain 34H / ATCC BAA-681) (Vibrio psychroerythus).